The following is a 223-amino-acid chain: Serine/threonine/tyrosine-interacting protein (223 aa).

Residues 28-176 (EMQEILPGLF…LQEYEAIYLA (149 aa)) enclose the Tyrosine-protein phosphatase domain. Residues 76-78 (FQQ) carry the Interaction with FBXW7 motif. Residues serine 184, serine 193, and serine 201 each carry the phosphoserine modification. Positions 197 to 223 (GTTGSLKRTHEEEDDFGTMQVATAQNG) are disordered.

This sequence belongs to the protein-tyrosine phosphatase family. Non-receptor class subfamily. In terms of assembly, interacts with MAPK1; independently of MAPK1 phosphorylation status. Interacts with CARHSP1/Crhsp-24. Interacts (via FQQ motif) with FBXW7 isoforms 1 (via F-box domain) and 3 (via F-box domain); the interaction is direct and prevents FBXW7 interaction with SKP1, a component of the SCF(FBXW7) complex. Does not interact with FBXW7 isoform 2.

It is found in the nucleus. The protein localises to the cytoplasm. Its subcellular location is the cytosol. In terms of biological role, catalytically inactive phosphatase. Acts as a nuclear anchor for MAPK1/MAPK3 (ERK1/ERK2). Modulates cell-fate decisions and cell migration by spatiotemporal regulation of MAPK1/MAPK3 (ERK1/ERK2). By binding to the F-box of FBXW7, prevents the assembly of FBXW7 into the SCF E3 ubiquitin-protein ligase complex, and thereby inhibits degradation of its substrates. Plays a role in spermatogenesis. This is Serine/threonine/tyrosine-interacting protein from Homo sapiens (Human).